We begin with the raw amino-acid sequence, 295 residues long: MRPQLSDYQHVSSGKVRDIYEVDDNTLLMVVTDRISAYDFALEPAIPDKGRVLTATTMFFFDAIDFPNHLAGPIDDARIPEEVLGRAIIVKKLNMLPFECVARGYLTGSGLKEYNANGTVCGIELPEGLVEASRLPEPIFTPATKAEQGDHDENVSFERVVQDLGQERAEQLRDETLRIYSAAAKIAEEKGIILADTKFEFGLDSEGNLVLGDEVLTPDSSRYWPADTYAEGIVQPSFDKQYVRNWLTSEESGWDVESETQPPVLPDDIVAATRLRYIEAYERLSGKRFIDFIGG.

The protein belongs to the SAICAR synthetase family.

It carries out the reaction 5-amino-1-(5-phospho-D-ribosyl)imidazole-4-carboxylate + L-aspartate + ATP = (2S)-2-[5-amino-1-(5-phospho-beta-D-ribosyl)imidazole-4-carboxamido]succinate + ADP + phosphate + 2 H(+). The protein operates within purine metabolism; IMP biosynthesis via de novo pathway; 5-amino-1-(5-phospho-D-ribosyl)imidazole-4-carboxamide from 5-amino-1-(5-phospho-D-ribosyl)imidazole-4-carboxylate: step 1/2. The sequence is that of Phosphoribosylaminoimidazole-succinocarboxamide synthase from Corynebacterium ammoniagenes (Brevibacterium ammoniagenes).